The primary structure comprises 461 residues: MVKDSEFLTLVFQSILDEIDVGLHVVDEHGNTIVYNNKMMQIEDMEKHDVLNKNLMDVFMFSKQQDSTLVQALQEGKTIKNVKQSYFNNKGQEITTINHTYPIVQDGKIRGAVEIAKDVTKLERLIRENMNKKGSTTYTFDSILGTSPAIQDVIENAKRATRTSSSVLLAGETGTGKELFAQSIHNGSDRSGGPFISQNCAALPDSLVESILFGTKKGAFTGAVDQPGLFEQAHGGTLLLDEINSLNLSLQAKLLRALQERKIRRIGSTKDTPIDVRIIATMNEDPIDAIAGERMRKDLYYRLSVVTLIIPPLRERKEDILLLASEFIQKNNHLFQMNVEHISDDVKQFFLSYDWPGNIRELEHMIEGAMNFMTDEQTITASHLPYQYRMKIKPADIPEPETPRHQPAADLKEKMESFEKYVIENVLRKHGHNISKAAQELGISRQSLQYRLKKFSHSSNE.

Position 57 is a 4-aspartylphosphate (Asp-57). Residues 143–372 (ILGTSPAIQD…EHMIEGAMNF (230 aa)) form the Sigma-54 factor interaction domain. Residues 171 to 178 (GETGTGKE) and 233 to 242 (AHGGTLLLDE) each bind ATP. Positions 434-453 (ISKAAQELGISRQSLQYRLK) form a DNA-binding region, H-T-H motif.

Functionally, positive regulator of arginine catabolism. Controls the transcription of the two operons rocABC and rocDEF and probably acts by binding to the corresponding upstream activating sequences. The protein is Transcriptional activator RocR (rocR) of Bacillus subtilis (strain 168).